The primary structure comprises 37 residues: Potassium channel toxin alpha-KTx 15.3 (37 aa).

Pyrrolidone carboxylic acid is present on Gln-1. 3 disulfide bridges follow: Cys-8–Cys-28, Cys-13–Cys-33, and Cys-17–Cys-35.

Expressed by the venom gland.

It localises to the secreted. In terms of biological role, inhibits A-type (Kv4) voltage-gated potassium channels of striated neurons (Ki=131 nM), probably by acting as a pore blocker. Has also been shown to block ERG1/Kv11.1/KCNH2 potassium channels (IC(50)=7.9 uM). The presence of the Kv4-associated proteins DPP6 or DPP10 is mandatory to have high-affinity blockade of Kv4.2/KCND2 and Kv4.3/KCND3 channels (80-90% inhibition at 500 nM of toxin). In contrast, the presence of the Kv4-associated protein KChIP1/KCNIP1 does not enhance the affinity blockade (only 40% inhibition at 500 nM). In adult rat brain, the toxin binds to sites in the striatum, and cerebellum. It shares the same target in rat brain than AaTX1 (AC Q867F4) and BmTX3 (AC Q8I0L5). In DPP6 knockout mice, A-type currents are about 20-fold less affected by the toxin. In rodent models of Parkinson's disease, the toxin reduces motor symptoms and emotional and cognitive symptoms. The polypeptide is Potassium channel toxin alpha-KTx 15.3 (Androctonus mauritanicus mauritanicus (Scorpion)).